A 533-amino-acid chain; its full sequence is Chromosomal replication initiator protein DnaA (533 aa).

Residues Met-1–Pro-72 are domain I, interacts with DnaA modulators. A domain II region spans residues Pro-72 to Ser-196. Residues Ala-83–Ala-113 form a disordered region. Pro residues predominate over residues Pro-96–Pro-110. The domain III, AAA+ region stretch occupies residues Lys-197 to Ser-413. ATP contacts are provided by Gly-241, Gly-243, Lys-244, and Thr-245. Positions Lys-414 to Gly-533 are domain IV, binds dsDNA.

This sequence belongs to the DnaA family. As to quaternary structure, oligomerizes as a right-handed, spiral filament on DNA at oriC.

It is found in the cytoplasm. Its function is as follows. Plays an essential role in the initiation and regulation of chromosomal replication. ATP-DnaA binds to the origin of replication (oriC) to initiate formation of the DNA replication initiation complex once per cell cycle. Binds the DnaA box (a 9 base pair repeat at the origin) and separates the double-stranded (ds)DNA. Forms a right-handed helical filament on oriC DNA; dsDNA binds to the exterior of the filament while single-stranded (ss)DNA is stabiized in the filament's interior. The ATP-DnaA-oriC complex binds and stabilizes one strand of the AT-rich DNA unwinding element (DUE), permitting loading of DNA polymerase. After initiation quickly degrades to an ADP-DnaA complex that is not apt for DNA replication. Binds acidic phospholipids. In Burkholderia mallei (strain SAVP1), this protein is Chromosomal replication initiator protein DnaA.